The chain runs to 616 residues: Zinc metalloproteinase nas-36 (616 aa).

The N-terminal stretch at 1-21 is a signal peptide; sequence MRRFCRLLFLNSLLSISICKA. Positions 22–125 are excised as a propeptide; sequence QNPAHLVADE…SKDKTKRLRR (104 aa). The Peptidase M12A domain occupies 126-321; sequence SFVSDKTATW…VATINTAYCK (196 aa). Cystine bridges form between C168–C320, C191–C210, C324–C345, C347–C356, C367–C396, C424–C444, C518–C549, C522–C554, and C534–C539. N173 carries an N-linked (GlcNAc...) asparagine glycan. Residue H218 coordinates Zn(2+). Residue E219 is part of the active site. 2 residues coordinate Zn(2+): H222 and H228. The region spanning 316–357 is the EGF-like domain; sequence NTAYCKEECKSEKTECEYGGYMRPSKCSECLCPDGLGGEKCE. Residues 367 to 481 form the CUB domain; the sequence is CGGILELSDE…IGFKIQVRST (115 aa). The region spanning 506–555 is the TSP type-1 domain; it reads PNVWADWGEWSMCSRTCGGCGIRSRVRSCRSKKCEGRRQEFGTCNLKACP.

Zn(2+) is required as a cofactor.

The protein resides in the secreted. Mtalloprotease. Involved in molting, a process during larval stages in which a new cuticle is formed and the old cuticle is shed. The sequence is that of Zinc metalloproteinase nas-36 from Caenorhabditis briggsae.